We begin with the raw amino-acid sequence, 160 residues long: DNA polymerase delta subunit 4 (160 aa).

Residues 1–48 are disordered; the sequence is MKKRTTQAKKSGQNTNIRDVFPHVVRSNSSQSHIGKKVSSEQSPTPDV. The span at 8-17 shows a compositional bias: polar residues; it reads AKKSGQNTNI.

Belongs to the DNA polymerase delta subunit 4 family. Heterotetramer that consist of the pol3, cdc1, cdc27 and cdm1 subunits. Interacts with cdc1 and pol3.

Its subcellular location is the nucleus. Functionally, appears to have a role in the stabilization of the DNA polymerase delta complex. The protein is DNA polymerase delta subunit 4 (cdm1) of Schizosaccharomyces pombe (strain 972 / ATCC 24843) (Fission yeast).